A 705-amino-acid polypeptide reads, in one-letter code: MSQSSDFILNSTLSSVVERSTPDIAGFCSGYELRRHHHEHLANEGSLRCRTDWEQFIGPIERWGSCNPWEGHFGAVVLPFCKPERLAVICYIFEYAFLYDNVVESAAKSTLNLNTDNIALDETEYRTVRSILGTKQIQSKMLLELLSIDAPRAEVVINSWKEMISTTAKKDKTRAFNNLEEYVDYRIIDTGAPFVDMLMRFGMGIMLTQEEQKRIEPIVKPCYAALGLANDYFSFDIEWEEFQAESDKTTMTNAVWLFMQWENLNAEQAKRRVQEVTKQYEQQYLRNIADFAAGEGKENIKLQTYLKAQGYQVPGNVAWSLRCPRYHPWLCKEAASLLHQDTIQELEAGRKPQALEEYRSRSHSESDLSDASPTFWSGSCRSSARSSVSSAFGPPDKDISITPAILGDEHLLGPAEYISSLPSKGVREAFIDGLNVWLVLPDHRVNQLKSIAQTLHNASLMLDDIEDHSPLRRGRPSTHMIFGTEQTINSANFLLIDVMEKVRQLDDPRCMDIYLEEMRNLFIGQSFDLYWTRNGECPSEEQYLDMIRQKTGGLFRLLTRMMVQIAPVQQKGLETQLASLSDVLGEFFQVRDDYKNLTEEYTGQKGFCEDLDECKFSYPLIHALTSQPKNVQLRGILQQSRSAGGLDVPLKETVLSHLRQAGSIEYTEAKMGELMEKITDSVVSLEGETGSPNWVVRLLIHRLKV.

Residues 9 to 331 (LNSTLSSVVE…RCPRYHPWLC (323 aa)) are terpene cyclase. Asp-100 is a binding site for Mg(2+). Residues Asp-100, 186–189 (RIID), Asn-230, 234–238 (SFDIE), and 325–326 (RY) each bind substrate. A DDXXD 1 motif is present at residues 100–104 (DNVVE). Positions 230–238 (NDYFSFDIE) match the NSE/DTE motif. Positions 332 to 705 (KEAASLLHQD…VRLLIHRLKV (374 aa)) are prenyltransferase. Over residues 349–366 (GRKPQALEEYRSRSHSES) the composition is skewed to basic and acidic residues. The interval 349–374 (GRKPQALEEYRSRSHSESDLSDASPT) is disordered. Positions 424, 427, and 456 each coordinate isopentenyl diphosphate. Mg(2+)-binding residues include Asp-463 and Asp-467. Positions 463–467 (DDIED) match the DDXXD 2 motif. Arg-472 is a dimethylallyl diphosphate binding site. Residue Arg-473 coordinates isopentenyl diphosphate. Dimethylallyl diphosphate contacts are provided by Lys-550, Thr-551, Gln-589, Asn-596, Lys-605, and Lys-615.

The protein in the N-terminal section; belongs to the terpene synthase family. It in the C-terminal section; belongs to the FPP/GGPP synthase family. In terms of assembly, hexamer. Mg(2+) serves as cofactor.

It carries out the reaction isopentenyl diphosphate + (2E,6E)-farnesyl diphosphate = (2E,6E,10E)-geranylgeranyl diphosphate + diphosphate. It catalyses the reaction isopentenyl diphosphate + (2E,6E,10E)-geranylgeranyl diphosphate = (2E,6E,10E,14E)-geranylfarnesyl diphosphate + diphosphate. The enzyme catalyses (2E,6E,10E)-geranylgeranyl diphosphate = variediene + diphosphate. The catalysed reaction is (2E,6E,10E,14E)-geranylfarnesyl diphosphate = (R,2E)-alpha-cericerene + diphosphate. It functions in the pathway secondary metabolite biosynthesis; terpenoid biosynthesis. Bifunctional terpene synthase that converts dimethylallyl diphosphate (DMAPP) and isopentenyl diphosphate (IPP) into variediene as a single product. The C-terminal prenyltransferase (PT) domain of EvVS catalyzes formation of geranylgeranyl pyrophosphate (GGPP), whereas the N-terminal terpene cyclase (TC) domain catalyzes the cyclization of GGPP to variediene. The PT domain can also synthesize geranylfarnesyl pyrophosphate (GFPP) from the C5 isoprene units in vitro, while the TC domain is able to cyclize GFPP to the sesterterpene (2E)-alpha-cericerene. This is Variediene synthase from Emericella variicolor (Aspergillus stellatus).